Consider the following 517-residue polypeptide: MSASTQGRRIVVVGAGVGGLAAAARLAHQGFDVQVFEKTQGPGGRCNRLQVDGFTWDLGPTIVLMPEVFEETFRAVGRRIEDYLTLLRCDPNYRVHFRDRSDVTFTSELCAMGRELERVEPGSYARYLAFLAQGRVQYRTSLDHLVGRNYAGLRDYLSPRVLARIFQVRAHRRMYADVSRFFQDERLRAAMTFQTMYLGVSPYASPAVYGLLPFTELGVGIWFPKGGLYAIPQALERLAREEGVRFHYGAPVERILTDGGRTRGVRLEGGEVVEADAVLCNADLPYAYEKLLDPKATTLKRKEKLRYTSSGYMLYLGMKRRYPELLHHNVVFGRDYKGSFDDIFEFRVPEDPSFYVNAPTRTDASLAPEGKDALYVLVPVPHQHPDLDWKVEGPKVRAKFFARMAELGFPSLESDIEVERRSSTPDDWAGTFNLARGSGFGLSQNFTQIGPFRPSNQDARVKNLFFVGASTQPGTGLPTVLISARLVTERLMTWAHAQGVSLSPRTAAATPLEGVAA.

11–44 (VVVGAGVGGLAAAARLAHQGFDVQVFEKTQGPGG) provides a ligand contact to FAD.

It belongs to the carotenoid/retinoid oxidoreductase family. Requires FAD as cofactor.

It carries out the reaction 15-cis-phytoene + 2 A = all-trans-zeta-carotene + 2 AH2. Its pathway is carotenoid biosynthesis; lycopene biosynthesis. Dehydrogenates carotenes in the cis conformation: has cis-to-trans isomerase activity and mediates dehydrogenation of cis-phytoene, producing zeta-carotene via the intermediary of phytofluene by the symmetrical introduction of 2 double bonds at the C-11 and C-11' positions of phytoene. This Myxococcus xanthus protein is zeta-carotene-forming phytoene desaturase (carA2).